Consider the following 359-residue polypeptide: CDP-glucose 4,6-dehydratase (359 aa).

The protein belongs to the NAD(P)-dependent epimerase/dehydratase family. NAD(+) is required as a cofactor.

It carries out the reaction CDP-D-glucose = CDP-4-dehydro-6-deoxy-D-glucose + H2O. It functions in the pathway nucleotide-sugar biosynthesis; CDP-3,6-dideoxy-D-mannose biosynthesis; CDP-3,6-dideoxy-D-mannose from CTP and alpha-D-glucose 1-phosphate: step 2/5. Its pathway is bacterial outer membrane biogenesis; LPS O-antigen biosynthesis. In Salmonella typhimurium (strain LT2 / SGSC1412 / ATCC 700720), this protein is CDP-glucose 4,6-dehydratase (rfbG).